The primary structure comprises 339 residues: Dual specificity protein phosphatase 12 (339 aa).

Methionine 1 bears the N-acetylmethionine mark. Residues 1-25 form a disordered region; the sequence is MLEAQGSNHGCERQAPTASPASSAG. In terms of domain architecture, Tyrosine-protein phosphatase spans 26–170; it reads HAVEVRPGLY…LKLYEAMGYE (145 aa). Cysteine 114 functions as the Phosphocysteine intermediate in the catalytic mechanism. 115 to 120 contributes to the substrate binding site; it reads HAGVSR. Position 334 is a phosphoserine (serine 334).

It belongs to the protein-tyrosine phosphatase family. Non-receptor class dual specificity subfamily. Monomer. The cofactor is Zn(2+).

The protein resides in the nucleus. It is found in the cytoplasm. The protein localises to the cytosol. The enzyme catalyses O-phospho-L-tyrosyl-[protein] + H2O = L-tyrosyl-[protein] + phosphate. The catalysed reaction is O-phospho-L-seryl-[protein] + H2O = L-seryl-[protein] + phosphate. It carries out the reaction O-phospho-L-threonyl-[protein] + H2O = L-threonyl-[protein] + phosphate. In terms of biological role, dual specificity phosphatase; can dephosphorylate both phosphotyrosine and phosphoserine or phosphothreonine residues. Can dephosphorylate glucokinase (in vitro). Has phosphatase activity with the synthetic substrate 6,8-difluoro-4-methylumbelliferyl phosphate and other in vitro substrates. The polypeptide is Dual specificity protein phosphatase 12 (Dusp12) (Mus musculus (Mouse)).